Here is a 156-residue protein sequence, read N- to C-terminus: Small ribosomal subunit protein uS7 (156 aa).

This sequence belongs to the universal ribosomal protein uS7 family. In terms of assembly, part of the 30S ribosomal subunit. Contacts proteins S9 and S11.

One of the primary rRNA binding proteins, it binds directly to 16S rRNA where it nucleates assembly of the head domain of the 30S subunit. Is located at the subunit interface close to the decoding center, probably blocks exit of the E-site tRNA. The polypeptide is Small ribosomal subunit protein uS7 (Staphylococcus saprophyticus subsp. saprophyticus (strain ATCC 15305 / DSM 20229 / NCIMB 8711 / NCTC 7292 / S-41)).